Consider the following 355-residue polypeptide: Fructose-1,6-bisphosphatase class 1 (355 aa).

Residues E94, D116, L118, and D119 each contribute to the Mg(2+) site. Substrate-binding positions include 119-122 (DGSS), N211, and 263-265 (YLY). E283 serves as a coordination point for Mg(2+).

It belongs to the FBPase class 1 family. Homotetramer. Requires Mg(2+) as cofactor.

The protein resides in the cytoplasm. It carries out the reaction beta-D-fructose 1,6-bisphosphate + H2O = beta-D-fructose 6-phosphate + phosphate. It participates in carbohydrate biosynthesis; Calvin cycle. The chain is Fructose-1,6-bisphosphatase class 1 from Rhodospirillum rubrum (strain ATCC 11170 / ATH 1.1.1 / DSM 467 / LMG 4362 / NCIMB 8255 / S1).